We begin with the raw amino-acid sequence, 1225 residues long: uncharacterized protein (1225 aa).

Residues 1–15 show a composition bias toward polar residues; sequence MSSQAEPSKGASNAD. Residues 1–104 form a disordered region; it reads MSSQAEPSKG…VDGVPTRPVS (104 aa). Residues 16 to 25 are compositionally biased toward basic and acidic residues; it reads PNEKVEKMHL. Polar residues predominate over residues 43–65; it reads ASPSDKNNLNPQSAGVSEVQVQD. Residues 167 to 187 form a helical membrane-spanning segment; it reads FLFGYLRFGFLSLFIIMAVCI. The region spanning 217 to 422 is the SMP-LTD domain; sequence DSETVTWLNT…SPNVYELDIE (206 aa). 3 consecutive C2 domains span residues 413 to 534, 559 to 668, and 685 to 803; these read SPNV…NDAF, DSGE…LLWF, and KPAQ…GALM. Serine 843 bears the Phosphoserine mark. The disordered stretch occupies residues 867–890; that stretch reads PESQKTPTAVDNTSTSRGSTSVKT. Polar residues predominate over residues 869 to 890; that stretch reads SQKTPTAVDNTSTSRGSTSVKT. One can recognise a C2 4 domain in the interval 1019–1137; that stretch reads RLTPVPVKLE…QQQQQTNYEI (119 aa). Residues aspartate 1053, aspartate 1059, aspartate 1107, aspartate 1109, and aspartate 1115 each coordinate Ca(2+).

Requires Ca(2+) as cofactor.

It localises to the endoplasmic reticulum membrane. This is an uncharacterized protein from Schizosaccharomyces pombe (strain 972 / ATCC 24843) (Fission yeast).